The primary structure comprises 450 residues: MSEPAPAKRLYIKTYGCQMNVYDSERMADVLAPLGYGVTDDPAAADLVVLNTCHIREKATEKVYSELGQIKRLKEARRAEGQGMTIAVAGCVAQAEGEEIMRRQPAVDLVVGPQAYHQLPELIARAHRARGERLAADFAPDEKFDALATERRPTGVTAFLTVQEGCDKFCTFCVVPYTRGGEWSRPAEAIEAEARALAAKGVREVTLLGQNVNAYDGANGQGAGLAGLVRRLAKIPGLDRIRYTTSHPRDMDDDLIAAHAEVPELMPYLHLPVQAGSDRILRAMNRAHTAESYLRVIEKVRVARPDIAISGDFIVGFPGEREADFEATLQLVREVGYASCFSFKYSRRPGTPAAALPGQVAEEVKEERLQRLQALLEQQQLAFNAAQAGRVLPVLFEKTGRHPGQLIGRSPYLQAVHAHAPDRLIGQIVPVKVESGGRNSLAGVLELETA.

Residues 8 to 128 (KRLYIKTYGC…LPELIARAHR (121 aa)) enclose the MTTase N-terminal domain. Residues cysteine 17, cysteine 53, cysteine 91, cysteine 166, cysteine 170, and cysteine 173 each coordinate [4Fe-4S] cluster. Positions 152 to 382 (RPTGVTAFLT…QALLEQQQLA (231 aa)) constitute a Radical SAM core domain. Positions 385 to 447 (AAQAGRVLPV…RNSLAGVLEL (63 aa)) constitute a TRAM domain.

It belongs to the methylthiotransferase family. MiaB subfamily. Monomer. It depends on [4Fe-4S] cluster as a cofactor.

It is found in the cytoplasm. The catalysed reaction is N(6)-dimethylallyladenosine(37) in tRNA + (sulfur carrier)-SH + AH2 + 2 S-adenosyl-L-methionine = 2-methylsulfanyl-N(6)-dimethylallyladenosine(37) in tRNA + (sulfur carrier)-H + 5'-deoxyadenosine + L-methionine + A + S-adenosyl-L-homocysteine + 2 H(+). In terms of biological role, catalyzes the methylthiolation of N6-(dimethylallyl)adenosine (i(6)A), leading to the formation of 2-methylthio-N6-(dimethylallyl)adenosine (ms(2)i(6)A) at position 37 in tRNAs that read codons beginning with uridine. This chain is tRNA-2-methylthio-N(6)-dimethylallyladenosine synthase, found in Phenylobacterium zucineum (strain HLK1).